The sequence spans 290 residues: 33 kDa chaperonin (290 aa).

2 disulfide bridges follow: Cys235–Cys237 and Cys268–Cys271.

Belongs to the HSP33 family. In terms of processing, under oxidizing conditions two disulfide bonds are formed involving the reactive cysteines. Under reducing conditions zinc is bound to the reactive cysteines and the protein is inactive.

Its subcellular location is the cytoplasm. Redox regulated molecular chaperone. Protects both thermally unfolding and oxidatively damaged proteins from irreversible aggregation. Plays an important role in the bacterial defense system toward oxidative stress. This chain is 33 kDa chaperonin, found in Streptococcus pyogenes serotype M28 (strain MGAS6180).